Consider the following 322-residue polypeptide: Mas-related G-protein coupled receptor member X3 (322 aa).

The Extracellular segment spans residues 1 to 31 (MDPTIPALGTSQTPINRREETPCYKQTLSLT). A helical transmembrane segment spans residues 32 to 52 (VLTCIISLVGLTGNAVVLWLL). Over 53–60 (GFRMRRNA) the chain is Cytoplasmic. The chain crosses the membrane as a helical span at residues 61–81 (VSTYILNLAAVDFLFLSGHIV). Residues 82–96 (RSPLRLISIRHPISK) are Extracellular-facing. A helical transmembrane segment spans residues 97–117 (IVNPVMTFPYFIGLSMLSAIS). At 118-139 (TERCLSVLWPMWYRCRRPRHLS) the chain is on the cytoplasmic side. A helical transmembrane segment spans residues 140–160 (VVVCVLLWALSLLRSILEWMF). Residues 161 to 177 (CDFLFSGADSVWCETSD) are Extracellular-facing. Residues 178–198 (FITIAWLIFLCVVLCGSSLVL) traverse the membrane as a helical segment. Residues 199-213 (LVRILCGSRKMPLTR) lie on the Cytoplasmic side of the membrane. A helical transmembrane segment spans residues 214 to 234 (LYVTILLTVLVFLLCGLPFGI). Residues 235–254 (QWALFSRIHLDWKVLFCHVH) are Extracellular-facing. A helical membrane pass occupies residues 255 to 275 (LISVFLSSLNSSANPIIYFFV). Residues 276–322 (GSFRQRQNRQNLKLVLQRALQDTPEVDEGGGRLPEETLELSVSRLEQ) lie on the Cytoplasmic side of the membrane.

Belongs to the G-protein coupled receptor 1 family. Mas subfamily.

Its subcellular location is the cell membrane. Functionally, orphan receptor. Probably involved in the function of nociceptive neurons. May regulate nociceptor function and/or development, including the sensation or modulation of pain. Potently activated by enkephalins. The sequence is that of Mas-related G-protein coupled receptor member X3 (MRGPRX3) from Macaca mulatta (Rhesus macaque).